We begin with the raw amino-acid sequence, 225 residues long: MAWLIMEEEEVDGIPVNEFGRLEIGFDYGFDFTGIVTPPVSTDYDVTLYAKLGLYCYNFQKGTNLKFVRWEKYNTSTGTAYIDNYITLEAMDPSCNSVFSFQTVFSAAGCYNQDTYHVQDWRVLACRPTCGKSVNEYFDRHEAMDPFYTGKMPKWLSDDALAFDNKKYYVVQESDLHENDWLLVFMEMVFLQEKSCVSSSDHKAIIRKTMDGVPEHMSLEIALVK.

The protein belongs to the UPF0725 (EMB2204) family.

The sequence is that of UPF0725 protein At5g63820 from Arabidopsis thaliana (Mouse-ear cress).